The primary structure comprises 242 residues: Ubiquinone biosynthesis O-methyltransferase (242 aa).

4 residues coordinate S-adenosyl-L-methionine: arginine 44, glycine 64, aspartate 85, and methionine 129.

It belongs to the methyltransferase superfamily. UbiG/COQ3 family.

The catalysed reaction is a 3-demethylubiquinol + S-adenosyl-L-methionine = a ubiquinol + S-adenosyl-L-homocysteine + H(+). The enzyme catalyses a 3-(all-trans-polyprenyl)benzene-1,2-diol + S-adenosyl-L-methionine = a 2-methoxy-6-(all-trans-polyprenyl)phenol + S-adenosyl-L-homocysteine + H(+). Its pathway is cofactor biosynthesis; ubiquinone biosynthesis. Functionally, O-methyltransferase that catalyzes the 2 O-methylation steps in the ubiquinone biosynthetic pathway. This is Ubiquinone biosynthesis O-methyltransferase from Yersinia enterocolitica serotype O:8 / biotype 1B (strain NCTC 13174 / 8081).